The primary structure comprises 339 residues: Tetracenomycin polyketide synthesis 8-O-methyl transferase TcmO (339 aa).

S-adenosyl-L-methionine is bound by residues Asp-200 and Gly-226–Phe-228. Residue His-246 is the Proton acceptor of the active site.

Belongs to the class I-like SAM-binding methyltransferase superfamily. Cation-independent O-methyltransferase family.

Its pathway is antibiotic biosynthesis; tetracenomycin C biosynthesis. This chain is Tetracenomycin polyketide synthesis 8-O-methyl transferase TcmO (tcmO), found in Streptomyces glaucescens.